A 1478-amino-acid chain; its full sequence is MASTNAESQLQRIIRDLQDAVTELSKEFQEAGEPITDDSTSLHKFSYKLEYLLQFDQKEKATLLGNKKDYWDYFCACLAKVKGANDGIRFVKSISELRTSLGKGRAFIRYSLVHQRLADTLQQCFMNTKVTSDWYYARSPFLQPKLSSDIVGQLYELTEVQFDLASRGFDLDAAWPTFARRTLTTGSSAYLWKPPSRSSSMSSLVSSYLQTQEMVSNFDLNSPLNNEALEGFDEMRLELDQLEVREKQLRERMQQLDRENQELRAAVSQQGEQLQTERERGRTAAEDNVRLTCLVAELQKQWEVTQATQNTVKELQTCLQGLELGAAEKEEDYHTALRRLESMLQPLAQELEATRDSLDKKNQHLASFPGWLAMAQQKADTASDTKGRQEPIPSDAAQEMQELGEKLQALERERTKVEEVNRQQSAQLEQLVKELQLKEDARASLERLVKEMAPLQEELSGKGQEADQLWRRLQELLAHTSSWEEELAELRREKKQQQEEKELLEQEVRSLTRQLQFLETQLAQVSQHVSDLEEQKKQLIQDKDHLSQQVGMLERLAGPPGPELPVAGEKNEALVPVNSSLQEAWGKPEEEQRGLQEAQLDDTKVQEGSQEEELRQANRELEKELQNVVGRNQLLEGKLQALQADYQALQQRESAIQGSLASLEAEQASIRHLGDQMEASLLAVRKAKEAMKAQMAEKEAILQSKEGECQQLREEVEQCQQLAEARHRELRALESQCQQQTQLIEVLTAEKGQQGVGPPTDNEARELAAQLALSQAQLEVHQGEVQRLQAQVVDLQAKMRAALDDQDKVQSQLSMAEAVLREHKTLVQQLKEQNEALNRAHVQELLQCSEREGALQEERADEAQQREEELRALQEELSQAKCSSEEAQLEHAELQEQLHRANTDTAELGIQVCALTVEKERVEEALACAVQELQDAKEAASREREGLERQVAGLQQEKESLQEKLKAAKAAAGSLPGLQAQLAQAEQRAQSLQEAAHQELNTLKFQLSAEIMDYQSRLKNAGEECKSLRGQLEEQGRQLQAAEEAVEKLKATQADMGEKLSCTSNHLAECQAAMLRKDKEGAALREDLERTQKELEKATTKIQEYYNKLCQEVTNRERNDQKMLADLDDLNRTKKYLEERLIELLRDKDALWQKSDALEFQQKLSAEERWLGDTEANHCLDCKREFSWMVRRHHCRICGRIFCYYCCNNYVLSKHGGKKERCCRACFQKLSEGPGSPDSSGSGTSQGEPSPALSPASPGPQATGGQGANTDYRPPDDAVFDIITDEELCQIQESGSSLPETPTETDSLDPNAAEQDTTSTSLTPEDTEDMPVGQDSEICLLKSGELMIKVPLTVDEIASFGEGSRELFVRSSTYSLIPITVAEAGLTISWVFSSDPKSISFSVVFQEAEDTPLDQCKVLIPTTRCNSHKENIQGQLKVRTPGIYMLIFDNTFSRFVSKKVFYHLTVDRPVIYDGSDFL.

Alanine 2 is modified (N-acetylalanine). Residues 4–33 (TNAESQLQRIIRDLQDAVTELSKEFQEAGE) adopt a coiled-coil conformation. The RUN domain occupies 36–169 (TDDSTSLHKF…VQFDLASRGF (134 aa)). Serine 196 carries the phosphoserine modification. A coiled-coil region spans residues 225 to 280 (NNEALEGFDEMRLELDQLEVREKQLRERMQQLDRENQELRAAVSQQGEQLQTERER). Position 342 is a phosphoserine (serine 342). At threonine 381 the chain carries Phosphothreonine. Coiled-coil stretches lie at residues 394–555 (SDAA…MLER) and 596–1151 (QEAQ…KDAL). Residues 586-613 (GKPEEEQRGLQEAQLDDTKVQEGSQEEE) are disordered. Serine 878 carries the phosphoserine modification. The segment at 1173-1231 (DTEANHCLDCKREFSWMVRRHHCRICGRIFCYYCCNNYVLSKHGGKKERCCRACFQKLS) adopts an FYVE-type zinc-finger fold. Zn(2+) contacts are provided by cysteine 1179, cysteine 1182, cysteine 1195, cysteine 1198, cysteine 1203, cysteine 1206, cysteine 1223, and cysteine 1226. A compositionally biased stretch (low complexity) spans 1231 to 1261 (SEGPGSPDSSGSGTSQGEPSPALSPASPGPQ). 2 disordered regions span residues 1231-1277 (SEGP…PPDD) and 1294-1332 (SGSSLPETPTETDSLDPNAAEQDTTSTSLTPEDTEDMPV). Composition is skewed to polar residues over residues 1294 to 1305 (SGSSLPETPTET) and 1314 to 1324 (EQDTTSTSLTP). In terms of domain architecture, GOLD spans 1337 to 1466 (EICLLKSGEL…SKKVFYHLTV (130 aa)).

As to quaternary structure, can form homodimers. Interacts (via C-terminus) with MAP1LC3B. Interacts with RAB7A; the interaction with RAB7A induces FYCO1 recruitment to late endosomal/lysosomal compartments. Interacts with MAP1LC3B. Expressed in heart and skeletal muscle.

It is found in the cytoplasmic vesicle. It localises to the autophagosome. The protein resides in the endosome. The protein localises to the lysosome. Its function is as follows. May mediate microtubule plus end-directed vesicle transport. The chain is FYVE and coiled-coil domain-containing protein 1 (FYCO1) from Homo sapiens (Human).